Consider the following 632-residue polypeptide: 2-oxoacid:ferredoxin oxidoreductase subunit alpha (632 aa).

The short motif at 253–257 is the YPITP motif element; it reads YPITP. The substrate site is built by T256 and R344.

Heterodimer composed of an alpha and a beta subunit.

Its subcellular location is the cytoplasm. The enzyme catalyses a 2-oxocarboxylate + 2 oxidized [2Fe-2S]-[ferredoxin] + CoA = an acyl-CoA + 2 reduced [2Fe-2S]-[ferredoxin] + CO2 + H(+). Functionally, catalyzes the coenzyme A-dependent oxidative decarboxylation of different 2-oxoacids such as 2-oxoglutarate, pyruvate and 2-oxobutyrate to form their CoA derivatives. The protein is 2-oxoacid:ferredoxin oxidoreductase subunit alpha of Sulfolobus sp.